We begin with the raw amino-acid sequence, 70 residues long: Large ribosomal subunit protein bL31 (70 aa).

Residues Cys-16, Cys-18, Cys-36, and Cys-39 each coordinate Zn(2+).

This sequence belongs to the bacterial ribosomal protein bL31 family. Type A subfamily. As to quaternary structure, part of the 50S ribosomal subunit. The cofactor is Zn(2+).

Its function is as follows. Binds the 23S rRNA. The protein is Large ribosomal subunit protein bL31 of Fervidobacterium nodosum (strain ATCC 35602 / DSM 5306 / Rt17-B1).